Consider the following 82-residue polypeptide: RNA-binding protein KhpA (82 aa).

In terms of domain architecture, KH spans 35 to 82 (STILELRVSQSDVGKIIGRRGRIARAIRTLLGACAAKTNRRVQLEILD).

It belongs to the KhpA RNA-binding protein family. As to quaternary structure, forms a complex with KhpB.

The protein localises to the cytoplasm. Functionally, a probable RNA chaperone. Forms a complex with KhpB which binds to cellular RNA and controls its expression. Plays a role in peptidoglycan (PG) homeostasis and cell length regulation. This chain is RNA-binding protein KhpA, found in Borreliella burgdorferi (strain ATCC 35210 / DSM 4680 / CIP 102532 / B31) (Borrelia burgdorferi).